The following is a 482-amino-acid chain: C3a anaphylatoxin chemotactic receptor (482 aa).

At 1–23 (MASFSAETNSTDLLSQPWNEPPV) the chain is on the extracellular side. N-linked (GlcNAc...) asparagine glycosylation is present at Asn9. Residues 24–46 (ILSMVILSLTFLLGLPGNGLVLW) form a helical membrane-spanning segment. Residues 47-57 (VAGLKMQRTVN) are Cytoplasmic-facing. The helical transmembrane segment at 58-80 (TVWFLHLTLADLLCCLSLPFSLA) threads the bilayer. The Extracellular portion of the chain corresponds to 81 to 96 (HLALQGQWPYGRFLCE). A disulfide bridge links Cys95 with Cys172. A helical membrane pass occupies residues 97–118 (LIPSIIVLNMFASVFLLTAISL). At 119-139 (DRCLVVFKPIWCQNHRNVGTA) the chain is on the cytoplasmic side. Residues 140 to 160 (CSICGCIWVVAFVMCIPVFVY) form a helical membrane-spanning segment. Topologically, residues 161–340 (REIFTADNHN…TPLVAITITR (180 aa)) are extracellular. Residues Tyr174 and Tyr184 each carry the sulfotyrosine modification. Residue Asn194 is glycosylated (N-linked (GlcNAc...) asparagine). Tyr318 is subject to Sulfotyrosine. A helical transmembrane segment spans residues 341 to 360 (LVVGFLLPSVIMIACYSFIV). Residues 361–377 (FRMQRGRFAKSQSKTFR) lie on the Cytoplasmic side of the membrane. The chain crosses the membrane as a helical span at residues 378–400 (VAVVVVAVFLVCWTPYHIFGVLS). The Extracellular portion of the chain corresponds to 401–417 (LLIDPESPLGKTLMSWD). Residues 418-438 (HVSIALASANSCFNPFLYALL) traverse the membrane as a helical segment. The Cytoplasmic segment spans residues 439–482 (GKDFRKKARQSIQGILEAAFSEELTRSTHCNSNNVFSERNSTTV). The residue at position 459 (Ser459) is a Phosphoserine. The residue at position 463 (Thr463) is a Phosphothreonine.

It belongs to the G-protein coupled receptor 1 family. Interacts with VGF-derived peptide TLQP-21. Post-translationally, among the sulfation sites Tyr-174 is essential for binding of C3a anaphylatoxin.

The protein localises to the cell membrane. In terms of biological role, receptor for the chemotactic and inflammatory peptide anaphylatoxin C3a. This receptor stimulates chemotaxis, granule enzyme release and superoxide anion production. The polypeptide is C3a anaphylatoxin chemotactic receptor (C3AR1) (Pongo abelii (Sumatran orangutan)).